A 162-amino-acid polypeptide reads, in one-letter code: tRNA (cytidine(34)-2'-O)-methyltransferase (162 aa).

S-adenosyl-L-methionine contacts are provided by leucine 80, glycine 102, leucine 124, and serine 132.

It belongs to the class IV-like SAM-binding methyltransferase superfamily. RNA methyltransferase TrmH family. TrmL subfamily. In terms of assembly, homodimer.

Its subcellular location is the cytoplasm. The catalysed reaction is cytidine(34) in tRNA + S-adenosyl-L-methionine = 2'-O-methylcytidine(34) in tRNA + S-adenosyl-L-homocysteine + H(+). It carries out the reaction 5-carboxymethylaminomethyluridine(34) in tRNA(Leu) + S-adenosyl-L-methionine = 5-carboxymethylaminomethyl-2'-O-methyluridine(34) in tRNA(Leu) + S-adenosyl-L-homocysteine + H(+). Its function is as follows. Methylates the ribose at the nucleotide 34 wobble position in the two leucyl isoacceptors tRNA(Leu)(CmAA) and tRNA(Leu)(cmnm5UmAA). Catalyzes the methyl transfer from S-adenosyl-L-methionine to the 2'-OH of the wobble nucleotide. The protein is tRNA (cytidine(34)-2'-O)-methyltransferase of Acidovorax sp. (strain JS42).